Consider the following 168-residue polypeptide: Peptidoglycan-associated lipoprotein (168 aa).

The first 21 residues, 1–21 (MEMLKFGKFAALALAMAVAVG), serve as a signal peptide directing secretion. Cys22 carries the N-palmitoyl cysteine lipid modification. Cys22 carries the S-diacylglycerol cysteine lipid modification. An OmpA-like domain is found at 56 to 168 (SDEAALRAIT…AQNRRVELKK (113 aa)). The segment at 147 to 168 (RPVATGHDEQSWAQNRRVELKK) is disordered.

Belongs to the Pal lipoprotein family. In terms of assembly, the Tol-Pal system is composed of five core proteins: the inner membrane proteins TolA, TolQ and TolR, the periplasmic protein TolB and the outer membrane protein Pal. They form a network linking the inner and outer membranes and the peptidoglycan layer.

It is found in the cell outer membrane. Its function is as follows. Part of the Tol-Pal system, which plays a role in outer membrane invagination during cell division and is important for maintaining outer membrane integrity. The protein is Peptidoglycan-associated lipoprotein of Pseudomonas aeruginosa (strain ATCC 15692 / DSM 22644 / CIP 104116 / JCM 14847 / LMG 12228 / 1C / PRS 101 / PAO1).